The primary structure comprises 367 residues: Probable ATP-dependent RNA helicase MJ0669 (367 aa).

The Q motif motif lies at 6 to 34; it reads MNFNELNLSDNILNAIRNKGFEKPTDIQM. The 169-residue stretch at 38 to 206 folds into the Helicase ATP-binding domain; the sequence is PLFLNDEYNI…KKYMGDYSFI (169 aa). 51–58 is a binding site for ATP; the sequence is ARTGSGKT. A DEAD box motif is present at residues 154–157; it reads DEAD. Positions 213–367 constitute a Helicase C-terminal domain; it reads NIEQSYVEVN…KLKIKKLKFG (155 aa).

This sequence belongs to the DEAD box helicase family. Homodimer.

It catalyses the reaction ATP + H2O = ADP + phosphate + H(+). This chain is Probable ATP-dependent RNA helicase MJ0669, found in Methanocaldococcus jannaschii (strain ATCC 43067 / DSM 2661 / JAL-1 / JCM 10045 / NBRC 100440) (Methanococcus jannaschii).